Here is a 256-residue protein sequence, read N- to C-terminus: Imidazole glycerol phosphate synthase subunit HisF (256 aa).

Active-site residues include aspartate 12 and aspartate 131.

This sequence belongs to the HisA/HisF family. In terms of assembly, heterodimer of HisH and HisF.

The protein localises to the cytoplasm. It catalyses the reaction 5-[(5-phospho-1-deoxy-D-ribulos-1-ylimino)methylamino]-1-(5-phospho-beta-D-ribosyl)imidazole-4-carboxamide + L-glutamine = D-erythro-1-(imidazol-4-yl)glycerol 3-phosphate + 5-amino-1-(5-phospho-beta-D-ribosyl)imidazole-4-carboxamide + L-glutamate + H(+). It participates in amino-acid biosynthesis; L-histidine biosynthesis; L-histidine from 5-phospho-alpha-D-ribose 1-diphosphate: step 5/9. Its function is as follows. IGPS catalyzes the conversion of PRFAR and glutamine to IGP, AICAR and glutamate. The HisF subunit catalyzes the cyclization activity that produces IGP and AICAR from PRFAR using the ammonia provided by the HisH subunit. This is Imidazole glycerol phosphate synthase subunit HisF from Pseudomonas putida (strain ATCC 700007 / DSM 6899 / JCM 31910 / BCRC 17059 / LMG 24140 / F1).